Consider the following 410-residue polypeptide: Elongation factor Tu (410 aa).

The tr-type G domain occupies Lys-10–Glu-214. Residues Gly-19–Thr-26 form a G1 region. Gly-19–Thr-26 provides a ligand contact to GTP. Thr-26 contributes to the Mg(2+) binding site. The G2 stretch occupies residues Gly-60–Asn-64. The tract at residues Asp-81 to Gly-84 is G3. GTP contacts are provided by residues Asp-81 to His-85 and Asn-136 to Asp-139. Residues Asn-136–Asp-139 are G4. The interval Ser-174–Leu-176 is G5.

Belongs to the TRAFAC class translation factor GTPase superfamily. Classic translation factor GTPase family. EF-Tu/EF-1A subfamily. Monomer.

It localises to the cytoplasm. The catalysed reaction is GTP + H2O = GDP + phosphate + H(+). GTP hydrolase that promotes the GTP-dependent binding of aminoacyl-tRNA to the A-site of ribosomes during protein biosynthesis. The sequence is that of Elongation factor Tu from Gloeothece citriformis (strain PCC 7424) (Cyanothece sp. (strain PCC 7424)).